A 511-amino-acid polypeptide reads, in one-letter code: Histidine ammonia-lyase (511 aa).

Residues 142 to 144 constitute a cross-link (5-imidazolinone (Ala-Gly)); the sequence is ASG. At Ser-143 the chain carries 2,3-didehydroalanine (Ser).

Belongs to the PAL/histidase family. Post-translationally, contains an active site 4-methylidene-imidazol-5-one (MIO), which is formed autocatalytically by cyclization and dehydration of residues Ala-Ser-Gly.

The protein resides in the cytoplasm. The enzyme catalyses L-histidine = trans-urocanate + NH4(+). It functions in the pathway amino-acid degradation; L-histidine degradation into L-glutamate; N-formimidoyl-L-glutamate from L-histidine: step 1/3. The sequence is that of Histidine ammonia-lyase from Brucella abortus (strain S19).